The sequence spans 616 residues: MALLQISEPGLSAAPHQRRLAAGIDLGTTNSLVATVRSGQAETLADHEGRHLLPSVVHYQQQGHSVGYDARTNAALDTANTISSVKRLMGRSLADIQQRYPHLPYQFQASENGLPMIETAAGLLNPVRVSADILKALAARATEALAGELDGVVITVPAYFDDAQRQGTKDAARLAGLHVLRLLNEPTAAAIAYGLDSGQEGVIAVYDLGGGTFDISILRLSRGVFEVLATGGDSALGGDDFDHLLADYIREQAGIPDRSDNRVQRELLDAAIAAKIALSDADSVTVNVAGWQGEISREQFNELIAPLVKRTLLACRRALKDAGVEADEVLEVVMVGGSTRVPLVRERVGEFFGRPPLTSIDPDKVVAIGAAIQADILVGNKPDSEMLLLDVIPLSLGLETMGGLVEKVIPRNTTIPVARAQDFTTFKDGQTAMSIHVMQGERELVQDCRSLARFALRGIPALPAGGAHIRVTFQVDADGLLSVTAMEKSTGVEASIQVKPSYGLTDSEIASMIKDSMSYAEQDVKARMLAEQKVEAARVLESLHGALAADAALLSAAERQVIDDAAAHLSEVAQGDDVDAIEQAIKNVDKQTQDFAARRMDQSVRRALKGHSVDEV.

It belongs to the heat shock protein 70 family.

Chaperone involved in the maturation of iron-sulfur cluster-containing proteins. Has a low intrinsic ATPase activity which is markedly stimulated by HscB. Involved in the maturation of IscU. In Escherichia coli O45:K1 (strain S88 / ExPEC), this protein is Chaperone protein HscA.